A 137-amino-acid chain; its full sequence is uncharacterized protein (137 aa).

A helical transmembrane segment spans residues 111–131 (LAVGVLVGSNLVVGSLVFALL).

Its subcellular location is the membrane. This is an uncharacterized protein from Saccharomyces cerevisiae (strain ATCC 204508 / S288c) (Baker's yeast).